The chain runs to 87 residues: Sec-independent protein translocase protein TatA (87 aa).

The helical transmembrane segment at 3–23 (IFGIGLPEMIVILVVALLIFG) threads the bilayer. The tract at residues 61–87 (EGVKVSTSASEPEKVVDVSSATNTNKN) is disordered.

The protein belongs to the TatA/E family. As to quaternary structure, forms a complex with TatC.

It is found in the cell inner membrane. Functionally, part of the twin-arginine translocation (Tat) system that transports large folded proteins containing a characteristic twin-arginine motif in their signal peptide across membranes. TatA could form the protein-conducting channel of the Tat system. This Trichodesmium erythraeum (strain IMS101) protein is Sec-independent protein translocase protein TatA.